We begin with the raw amino-acid sequence, 496 residues long: Pup--protein ligase (496 aa).

A Mg(2+)-binding site is contributed by E30. R73 contacts ATP. Y75 is a Mg(2+) binding site. D77 acts as the Proton acceptor in catalysis. E83 lines the Mg(2+) pocket. ATP is bound by residues T86 and W450.

The protein belongs to the Pup ligase/Pup deamidase family. Pup-conjugating enzyme subfamily.

The enzyme catalyses ATP + [prokaryotic ubiquitin-like protein]-L-glutamate + [protein]-L-lysine = ADP + phosphate + N(6)-([prokaryotic ubiquitin-like protein]-gamma-L-glutamyl)-[protein]-L-lysine.. It participates in protein degradation; proteasomal Pup-dependent pathway. It functions in the pathway protein modification; protein pupylation. In terms of biological role, catalyzes the covalent attachment of the prokaryotic ubiquitin-like protein modifier Pup to the proteasomal substrate proteins, thereby targeting them for proteasomal degradation. This tagging system is termed pupylation. The ligation reaction involves the side-chain carboxylate of the C-terminal glutamate of Pup and the side-chain amino group of a substrate lysine. The sequence is that of Pup--protein ligase from Bifidobacterium animalis subsp. lactis (strain AD011).